The primary structure comprises 137 residues: Large ribosomal subunit protein uL13 (137 aa).

At R55 the chain carries Citrulline. S73 is subject to Phosphoserine. Position 136 is a citrulline (R136).

This sequence belongs to the universal ribosomal protein uL13 family. Component of the 60S ribosome. Component of the GAIT complex. Interacts with EIF4G1. Post-translationally, phosphorylation at Ser-73 upon interferon-gamma treatment in macrophages involves a DAPK1-DAPK3 kinase cascade and is causing release from the ribosome, association with the GAIT complex and subsequent involvement in transcript-selective translation inhibition. In terms of processing, citrullinated by PADI4.

It is found in the cytoplasm. Functionally, associated with ribosomes but is not required for canonical ribosome function and has extra-ribosomal functions. Component of the GAIT (gamma interferon-activated inhibitor of translation) complex which mediates interferon-gamma-induced transcript-selective translation inhibition in inflammation processes. Upon interferon-gamma activation and subsequent phosphorylation dissociates from the ribosome and assembles into the GAIT complex which binds to stem loop-containing GAIT elements in the 3'-UTR of diverse inflammatory mRNAs (such as ceruplasmin) and suppresses their translation. In the GAIT complex interacts with m7G cap-bound eIF4G at or near the eIF3-binding site and blocks the recruitment of the 43S ribosomal complex. Involved in methylation of rRNA. The sequence is that of Large ribosomal subunit protein uL13 (RPL13A) from Sus scrofa (Pig).